The following is a 364-amino-acid chain: sn-glycerol-3-phosphate import ATP-binding protein UgpC (364 aa).

The 232-residue stretch at 4–235 (VVLRNVRKTY…PATTFVASFI (232 aa)) folds into the ABC transporter domain. 37 to 44 (GPSGCGKS) is an ATP binding site.

This sequence belongs to the ABC transporter superfamily. sn-glycerol-3-phosphate importer (TC 3.A.1.1.3) family. In terms of assembly, the complex is composed of two ATP-binding proteins (UgpC), two transmembrane proteins (UgpA and UgpE) and a solute-binding protein (UgpB).

Its subcellular location is the cell inner membrane. The catalysed reaction is sn-glycerol 3-phosphate(out) + ATP + H2O = sn-glycerol 3-phosphate(in) + ADP + phosphate + H(+). In terms of biological role, part of the ABC transporter complex UgpBAEC involved in sn-glycerol-3-phosphate (G3P) import. Responsible for energy coupling to the transport system. The sequence is that of sn-glycerol-3-phosphate import ATP-binding protein UgpC from Rhodopseudomonas palustris (strain BisB5).